The primary structure comprises 217 residues: Phosphoenolpyruvate guanylyltransferase (217 aa).

Residues Thr150, Gly165, and Ser168 each contribute to the phosphoenolpyruvate site.

Belongs to the CofC family.

It carries out the reaction phosphoenolpyruvate + GTP + H(+) = enolpyruvoyl-2-diphospho-5'-guanosine + diphosphate. The protein operates within cofactor biosynthesis; coenzyme F420 biosynthesis. In terms of biological role, guanylyltransferase that catalyzes the activation of phosphoenolpyruvate (PEP) as enolpyruvoyl-2-diphospho-5'-guanosine, via the condensation of PEP with GTP. It is involved in the biosynthesis of coenzyme F420, a hydride carrier cofactor. The sequence is that of Phosphoenolpyruvate guanylyltransferase from Mycobacterium ulcerans (strain Agy99).